The sequence spans 251 residues: Probable transcriptional regulatory protein cgR_1708 (251 aa).

The tract at residues 1-22 (MAGHSKWATTKHKKAANDAKRG) is disordered.

The protein belongs to the TACO1 family.

It localises to the cytoplasm. The sequence is that of Probable transcriptional regulatory protein cgR_1708 from Corynebacterium glutamicum (strain R).